A 154-amino-acid chain; its full sequence is 6,7-dimethyl-8-ribityllumazine synthase (154 aa).

5-amino-6-(D-ribitylamino)uracil is bound by residues F15, 47–49 (TFD), and 71–73 (AVI). Position 76–77 (76–77 (ET)) interacts with (2S)-2-hydroxy-3-oxobutyl phosphate. H79 serves as the catalytic Proton donor. L104 is a binding site for 5-amino-6-(D-ribitylamino)uracil. R119 serves as a coordination point for (2S)-2-hydroxy-3-oxobutyl phosphate.

This sequence belongs to the DMRL synthase family.

It carries out the reaction (2S)-2-hydroxy-3-oxobutyl phosphate + 5-amino-6-(D-ribitylamino)uracil = 6,7-dimethyl-8-(1-D-ribityl)lumazine + phosphate + 2 H2O + H(+). The protein operates within cofactor biosynthesis; riboflavin biosynthesis; riboflavin from 2-hydroxy-3-oxobutyl phosphate and 5-amino-6-(D-ribitylamino)uracil: step 1/2. Catalyzes the formation of 6,7-dimethyl-8-ribityllumazine by condensation of 5-amino-6-(D-ribitylamino)uracil with 3,4-dihydroxy-2-butanone 4-phosphate. This is the penultimate step in the biosynthesis of riboflavin. The protein is 6,7-dimethyl-8-ribityllumazine synthase of Saccharolobus islandicus (strain L.S.2.15 / Lassen #1) (Sulfolobus islandicus).